A 498-amino-acid polypeptide reads, in one-letter code: MRTNPTTSRPGISTIEEKSVGRIDQIIGPVLDITFPPGKLPYIYNALIVKSRDTADKQINVTCEVQQLLGNNRVRAVAMSATEGLMRGMEVIDTGTPLSVPVGGATLGRIFNVLGEPIDNLGPVDTSATFPIHRSAPAFIELDTKLSIFETGIKVVDLLAPYRRGGKIGLFGGAGVGKTVLIMELINNIAKAHGGVSVFGGVGERTREGNDLYMEMKESGVINEKNIEESKVALVYGQMNEPPGARMRVGLTALTMAEYFRDVNKQDVLLFIDNIFRFVQAGSEVSALLGRMPSAVGYQPTLSTEMGSLQERITSTKKGSITSIQAVYVPADDLTDPAPATTFAHLDATTVLSRGLASKGIYPAVDPLDSTSTMLQPRIVGNEHYETAQRVKETLQRYKELQDIIAILGLDELSEEDRLTVARARKIERFLSQPFFVAEVFTGSPGKYVGLAETIRGFQLILSGELDGLPEQAFYLVGNIDEASTKAINLEEESKLKK.

Residue 172–179 (GGAGVGKT) coordinates ATP.

It belongs to the ATPase alpha/beta chains family. In terms of assembly, F-type ATPases have 2 components, CF(1) - the catalytic core - and CF(0) - the membrane proton channel. CF(1) has five subunits: alpha(3), beta(3), gamma(1), delta(1), epsilon(1). CF(0) has four main subunits: a(1), b(1), b'(1) and c(9-12).

The protein resides in the plastid. It localises to the chloroplast thylakoid membrane. It catalyses the reaction ATP + H2O + 4 H(+)(in) = ADP + phosphate + 5 H(+)(out). Functionally, produces ATP from ADP in the presence of a proton gradient across the membrane. The catalytic sites are hosted primarily by the beta subunits. This Zea mays (Maize) protein is ATP synthase subunit beta, chloroplastic.